We begin with the raw amino-acid sequence, 353 residues long: Nicotinate-nucleotide--dimethylbenzimidazole phosphoribosyltransferase (353 aa).

The Proton acceptor role is filled by Glu320.

This sequence belongs to the CobT family.

The enzyme catalyses 5,6-dimethylbenzimidazole + nicotinate beta-D-ribonucleotide = alpha-ribazole 5'-phosphate + nicotinate + H(+). It participates in nucleoside biosynthesis; alpha-ribazole biosynthesis; alpha-ribazole from 5,6-dimethylbenzimidazole: step 1/2. Its function is as follows. Catalyzes the synthesis of alpha-ribazole-5'-phosphate from nicotinate mononucleotide (NAMN) and 5,6-dimethylbenzimidazole (DMB). In Pseudoalteromonas translucida (strain TAC 125), this protein is Nicotinate-nucleotide--dimethylbenzimidazole phosphoribosyltransferase.